The primary structure comprises 269 residues: Hydroxyethylthiazole kinase (269 aa).

Position 46 (Met-46) interacts with substrate. ATP is bound by residues Arg-122 and Thr-168. Gly-195 is a binding site for substrate.

This sequence belongs to the Thz kinase family. Mg(2+) is required as a cofactor.

The enzyme catalyses 5-(2-hydroxyethyl)-4-methylthiazole + ATP = 4-methyl-5-(2-phosphooxyethyl)-thiazole + ADP + H(+). It participates in cofactor biosynthesis; thiamine diphosphate biosynthesis; 4-methyl-5-(2-phosphoethyl)-thiazole from 5-(2-hydroxyethyl)-4-methylthiazole: step 1/1. Functionally, catalyzes the phosphorylation of the hydroxyl group of 4-methyl-5-beta-hydroxyethylthiazole (THZ). This is Hydroxyethylthiazole kinase from Chloroflexus aurantiacus (strain ATCC 29366 / DSM 635 / J-10-fl).